The sequence spans 391 residues: Succinate--CoA ligase [ADP-forming] subunit beta (391 aa).

Positions 9 to 245 constitute an ATP-grasp domain; sequence KQIFAEYGVP…LSEEDPDEVE (237 aa). Residues Lys46, 53 to 55, Glu99, Ala102, and Glu107 each bind ATP; that span reads GRG. Asn200 and Asp214 together coordinate Mg(2+). Residues Asn265 and 322-324 contribute to the substrate site; that span reads GIV.

The protein belongs to the succinate/malate CoA ligase beta subunit family. Heterotetramer of two alpha and two beta subunits. Requires Mg(2+) as cofactor.

The catalysed reaction is succinate + ATP + CoA = succinyl-CoA + ADP + phosphate. It carries out the reaction GTP + succinate + CoA = succinyl-CoA + GDP + phosphate. Its pathway is carbohydrate metabolism; tricarboxylic acid cycle; succinate from succinyl-CoA (ligase route): step 1/1. Functionally, succinyl-CoA synthetase functions in the citric acid cycle (TCA), coupling the hydrolysis of succinyl-CoA to the synthesis of either ATP or GTP and thus represents the only step of substrate-level phosphorylation in the TCA. The beta subunit provides nucleotide specificity of the enzyme and binds the substrate succinate, while the binding sites for coenzyme A and phosphate are found in the alpha subunit. This Sulfurovum sp. (strain NBC37-1) protein is Succinate--CoA ligase [ADP-forming] subunit beta.